A 345-amino-acid chain; its full sequence is Phosphoribosylformylglycinamidine cyclo-ligase (345 aa).

Belongs to the AIR synthase family.

It is found in the cytoplasm. The enzyme catalyses 2-formamido-N(1)-(5-O-phospho-beta-D-ribosyl)acetamidine + ATP = 5-amino-1-(5-phospho-beta-D-ribosyl)imidazole + ADP + phosphate + H(+). It functions in the pathway purine metabolism; IMP biosynthesis via de novo pathway; 5-amino-1-(5-phospho-D-ribosyl)imidazole from N(2)-formyl-N(1)-(5-phospho-D-ribosyl)glycinamide: step 2/2. In Chromobacterium violaceum (strain ATCC 12472 / DSM 30191 / JCM 1249 / CCUG 213 / NBRC 12614 / NCIMB 9131 / NCTC 9757 / MK), this protein is Phosphoribosylformylglycinamidine cyclo-ligase.